The chain runs to 239 residues: Uridylate kinase (239 aa).

ATP is bound at residue 13–16 (KVSG). Glycine 55 is a UMP binding site. ATP-binding residues include glycine 56 and arginine 60. UMP is bound by residues aspartate 75 and 136 to 143 (TGNPFCTT). Positions 163, 164, 169, and 172 each coordinate ATP.

Belongs to the UMP kinase family. Homohexamer.

Its subcellular location is the cytoplasm. The catalysed reaction is UMP + ATP = UDP + ADP. Its pathway is pyrimidine metabolism; CTP biosynthesis via de novo pathway; UDP from UMP (UMPK route): step 1/1. Its activity is regulated as follows. Inhibited by UTP. Catalyzes the reversible phosphorylation of UMP to UDP. The chain is Uridylate kinase from Rickettsia bellii (strain RML369-C).